Reading from the N-terminus, the 470-residue chain is Acetyl-CoA decarbonylase/synthase complex subunit beta 2 (470 aa).

[Ni-Fe-S] cluster is bound by residues Cys190, Cys193, Cys279, and Cys281.

It belongs to the CdhC family. In terms of assembly, monomer. The ACDS complex is made up of alpha, epsilon, beta, gamma and delta chains with a probable stoichiometry of (alpha(2)epsilon(2))(4)-beta(8)-(gamma(1)delta(1))(8) (Potential). It depends on [Ni-Fe-S] cluster as a cofactor.

The catalysed reaction is Co(I)-[corrinoid Fe-S protein] + acetyl-CoA + H(+) = methyl-Co(III)-[corrinoid Fe-S protein] + CO + CoA. It participates in one-carbon metabolism; methanogenesis from acetate. Part of a complex that catalyzes the reversible cleavage of acetyl-CoA, allowing growth on acetate as sole source of carbon and energy. The alpha-epsilon complex generates CO from CO(2), while the beta subunit (this protein) combines the CO with CoA and a methyl group to form acetyl-CoA. The methyl group, which is incorporated into acetyl-CoA, is transferred to the beta subunit by a corrinoid iron-sulfur protein (the gamma-delta complex). The protein is Acetyl-CoA decarbonylase/synthase complex subunit beta 2 (cdhC2) of Methanosarcina mazei (strain ATCC BAA-159 / DSM 3647 / Goe1 / Go1 / JCM 11833 / OCM 88) (Methanosarcina frisia).